Consider the following 227-residue polypeptide: MLIHIPSVLTVEEVAHCRQIMAGAEWVDGRVTAGPQSAMVKNNLQIPLSSDAHREMRDIVLRALGRNPTYNSAALPLRVVPPLFNRYDAGMSFAAHVDNAIRPIHETGARVRTDLSSTLFLSEPDEYDGGELVLHEPGSTQELKLPAGDMVLYPTTALHSVNEVTRGSRLASFFWTQSMIADEARRRIMFELDRTIMDLRTRLPDDDLAVLNLTNCYHNLMRQWCVL.

The region spanning 78 to 178 (RVVPPLFNRY…RLASFFWTQS (101 aa)) is the Fe2OG dioxygenase domain. H96, D98, and H159 together coordinate Fe cation. 2-oxoglutarate is bound at residue R169.

Requires Fe(2+) as cofactor. L-ascorbate serves as cofactor.

The polypeptide is PKHD-type hydroxylase GDI1238/Gdia_1949 (Gluconacetobacter diazotrophicus (strain ATCC 49037 / DSM 5601 / CCUG 37298 / CIP 103539 / LMG 7603 / PAl5)).